Here is a 402-residue protein sequence, read N- to C-terminus: Imidazolonepropionase (402 aa).

H66 and H68 together coordinate Fe(3+). H66 and H68 together coordinate Zn(2+). 4-imidazolone-5-propanoate is bound by residues R75, Y138, and H171. Y138 is an N-formimidoyl-L-glutamate binding site. Fe(3+) is bound at residue H236. Residue H236 participates in Zn(2+) binding. Q239 is a 4-imidazolone-5-propanoate binding site. D311 contacts Fe(3+). D311 lines the Zn(2+) pocket. N-formimidoyl-L-glutamate is bound by residues N313 and G315. T316 serves as a coordination point for 4-imidazolone-5-propanoate.

Belongs to the metallo-dependent hydrolases superfamily. HutI family. Zn(2+) serves as cofactor. Requires Fe(3+) as cofactor.

Its subcellular location is the cytoplasm. The enzyme catalyses 4-imidazolone-5-propanoate + H2O = N-formimidoyl-L-glutamate. It functions in the pathway amino-acid degradation; L-histidine degradation into L-glutamate; N-formimidoyl-L-glutamate from L-histidine: step 3/3. Catalyzes the hydrolytic cleavage of the carbon-nitrogen bond in imidazolone-5-propanoate to yield N-formimidoyl-L-glutamate. It is the third step in the universal histidine degradation pathway. This chain is Imidazolonepropionase, found in Pseudomonas aeruginosa (strain ATCC 15692 / DSM 22644 / CIP 104116 / JCM 14847 / LMG 12228 / 1C / PRS 101 / PAO1).